Consider the following 890-residue polypeptide: Chloroquine resistance transporter (890 aa).

2 disordered regions span residues 1–163 (MPPA…EAPL) and 280–300 (GMQR…AAEG). Residues 1 to 349 (MPPAHHGSGG…RATRWIDRNA (349 aa)) are Cytoplasmic-facing. Residues 8 to 19 (SGGRRRPGRGNK) are compositionally biased toward basic residues. Composition is skewed to low complexity over residues 102–126 (APSQ…SSRS) and 134–156 (SPVA…TSAS). A helical membrane pass occupies residues 350–372 (ATVRVACYTFLLLVTSTGNTICF). The Vacuolar segment spans residues 373-391 (KKMIDKMPNYSPCLTQVTT). A helical transmembrane segment spans residues 392–412 (VVFVPVFFALSLYTDYAGGLP). Over 413 to 422 (QEMADFPKRN) the chain is Cytoplasmic. Residues 423-443 (FAVMGFLDSFSGVMAIIGAVH) traverse the membrane as a helical segment. The Vacuolar portion of the chain corresponds to 444–447 (TTGT). The chain crosses the membrane as a helical span at residues 448 to 468 (TQVVLQQSCIVFSLLASIVML). Over 469–471 (RKR) the chain is Cytoplasmic. The chain crosses the membrane as a helical span at residues 472-492 (FHAAHYLGALVIILGVLVVKL). Over 493 to 505 (PDLLHPSSDGGGD) the chain is Vacuolar. The helical transmembrane segment at 506–526 (VFVFNLLYLLSNLPTAVSCVY) threads the bilayer. Residues 527–544 (KEVAFRGVEMGTNYLQAW) lie on the Cytoplasmic side of the membrane. The helical transmembrane segment at 545–565 (VALFQFLIGFLVLPLNALPVL) threads the bilayer. Topologically, residues 566-614 (GPQRVPLAELPASLWNGTRCLFGFNTIVTNCGGAGNMESPCDNCEGAWK) are vacuolar. N-linked (GlcNAc...) asparagine glycosylation is present at Asn-581. Disulfide bonds link Cys-585–Cys-609 and Cys-596–Cys-606. The helical transmembrane segment at 615 to 634 (YVGMYLSFNLLYNMFIIFVV) threads the bilayer. Over 635–640 (KSGGAA) the chain is Cytoplasmic. Residues 641 to 663 (LTFLVSTLRLPVTALAFCSRAIM) form a helical membrane-spanning segment. The Vacuolar segment spans residues 664–673 (GDRAVPPKAT). The helical transmembrane segment at 674 to 694 (DFYGLLVLILGLVIYRAGGIM) threads the bilayer. Residues 695–890 (KRRAQRRAVA…GKSRANNGCI (196 aa)) lie on the Cytoplasmic side of the membrane. The disordered stretch occupies residues 798–871 (AAFTPFTQRM…NRVGGYEPPS (74 aa)).

It belongs to the CRT-like transporter family.

The protein resides in the vacuole membrane. Functionally, nutrient transporter. Involved in maintaining the osmotic homeostasis of the digestive vacuole. Required for the proper organization of the endolysosomal system and, in turn, indirectly for microneme secretion and parasite invasion. Required for bradyzoite viability and cyst development. This is Chloroquine resistance transporter from Toxoplasma gondii.